Reading from the N-terminus, the 171-residue chain is Ly6/PLAUR domain-containing protein 6 (171 aa).

Positions 1 to 25 (MEPSPALAWLLLLSLVADCLKAAQS) are cleaved as a signal peptide. Positions 47–141 (FKCFTCEKAA…PRNDTDATFA (95 aa)) constitute a UPAR/Ly6 domain. 6 disulfides stabilise this stretch: Cys-49–Cys-77, Cys-52–Cys-61, Cys-70–Cys-96, Cys-102–Cys-121, Cys-107–Cys-118, and Cys-122–Cys-127. A NxI motif motif is present at residues 88–90 (NSI). N-linked (GlcNAc...) asparagine glycosylation is found at Asn-134 and Asn-147. Residue Asn-147 is the site of GPI-anchor amidated asparagine attachment. The propeptide at 148 to 171 (QTNGHPHCVSVIVSCLWVWLGLTL) is removed in mature form.

Interacts with nicotinic acetylcholine receptors (nAChRs) including CHRNA3, CHRNA4, CHRNA5, CHRNA6, CHRNA7, CHRNB2 and CHRNB4. Interacts (via NxI motif) with LRP6. Expressed at high levels in the cortex and cerebellum of the brain, at moderate levels in the lung, kidney, and liver, and at low levels in the heart and prostate (at protein level). Expressed in neurons (at protein level).

It is found in the secreted. It localises to the cytoplasm. The protein resides in the cell membrane. The protein localises to the synapse. Its subcellular location is the synaptosome. It is found in the membrane raft. It localises to the cell projection. The protein resides in the dendrite. The protein localises to the perikaryon. Functionally, acts as a modulator of nicotinic acetylcholine receptors (nAChRs) function in the brain. Inhibits nicotine-induced Ca(2+) influx through nAChRs. In vitro, specifically inhibits alpha-3:beta-4 and alpha-7 nAChR currents in an allosteric manner. Acts as a positive regulator of Wnt/beta-catenin signaling. The protein is Ly6/PLAUR domain-containing protein 6 (Lypd6) of Rattus norvegicus (Rat).